The following is a 310-amino-acid chain: p-hydroxybenzoic acid efflux pump subunit AaeA (310 aa).

The chain crosses the membrane as a helical span at residues 12–32; the sequence is AITVVLVILAFIAIFNAWVYY.

Belongs to the membrane fusion protein (MFP) (TC 8.A.1) family.

The protein resides in the cell inner membrane. Forms an efflux pump with AaeB. This is p-hydroxybenzoic acid efflux pump subunit AaeA from Escherichia coli O127:H6 (strain E2348/69 / EPEC).